Reading from the N-terminus, the 612-residue chain is Dihydroxy-acid dehydratase (612 aa).

A Mg(2+)-binding site is contributed by aspartate 81. Cysteine 122 is a binding site for [2Fe-2S] cluster. Mg(2+)-binding residues include aspartate 123 and lysine 124. Residue lysine 124 is modified to N6-carboxylysine. Position 195 (cysteine 195) interacts with [2Fe-2S] cluster. A Mg(2+)-binding site is contributed by glutamate 491. The active-site Proton acceptor is the serine 517.

This sequence belongs to the IlvD/Edd family. As to quaternary structure, homodimer. It depends on [2Fe-2S] cluster as a cofactor. Mg(2+) serves as cofactor.

It carries out the reaction (2R)-2,3-dihydroxy-3-methylbutanoate = 3-methyl-2-oxobutanoate + H2O. The catalysed reaction is (2R,3R)-2,3-dihydroxy-3-methylpentanoate = (S)-3-methyl-2-oxopentanoate + H2O. The protein operates within amino-acid biosynthesis; L-isoleucine biosynthesis; L-isoleucine from 2-oxobutanoate: step 3/4. It participates in amino-acid biosynthesis; L-valine biosynthesis; L-valine from pyruvate: step 3/4. Its function is as follows. Functions in the biosynthesis of branched-chain amino acids. Catalyzes the dehydration of (2R,3R)-2,3-dihydroxy-3-methylpentanoate (2,3-dihydroxy-3-methylvalerate) into 2-oxo-3-methylpentanoate (2-oxo-3-methylvalerate) and of (2R)-2,3-dihydroxy-3-methylbutanoate (2,3-dihydroxyisovalerate) into 2-oxo-3-methylbutanoate (2-oxoisovalerate), the penultimate precursor to L-isoleucine and L-valine, respectively. The sequence is that of Dihydroxy-acid dehydratase from Rhizobium rhizogenes (strain K84 / ATCC BAA-868) (Agrobacterium radiobacter).